Here is an 812-residue protein sequence, read N- to C-terminus: Phospholipase D alpha 1 (812 aa).

Positions 1-46 are excised as a propeptide; it reads MAQMLLHGTLHATIFEAASLSNPHRASGSAPKFIRKFVEGIEDTVG. The C2 domain occupies 1–130; that stretch reads MAQMLLHGTL…LNGEEIDRWL (130 aa). Aspartate 190 contacts Ca(2+). In terms of domain architecture, PLD phosphodiesterase 1 spans 330–368; it reads TMFTHHQKIVVVDHELPNQGSQQRRIVSFVGGLDLCDGR. Residues histidine 335, lysine 337, and aspartate 342 contribute to the active site. Residue histidine 335 coordinates a 1,2-diacyl-sn-glycero-3-phosphate. Residues histidine 374 and histidine 408 each coordinate Ca(2+). The a 1,2-diacyl-sn-glycero-3-phosphate site is built by glutamine 524 and histidine 663. The region spanning 658 to 685 is the PLD phosphodiesterase 2 domain; it reads FMIYVHTKMMIVDDEYIIIGSANINQRS. Catalysis depends on residues histidine 663, lysine 665, and aspartate 670. Glutamate 724 provides a ligand contact to Ca(2+).

It belongs to the phospholipase D family. C2-PLD subfamily. Monomer. Ca(2+) serves as cofactor. Expressed in leaves, roots, developing seeds and cultured cells.

The catalysed reaction is a 1,2-diacyl-sn-glycero-3-phosphocholine + H2O = a 1,2-diacyl-sn-glycero-3-phosphate + choline + H(+). In terms of biological role, hydrolyzes glycerol-phospholipids at the terminal phosphodiesteric bond. Plays an important role in various cellular processes. This is Phospholipase D alpha 1 (PLD1) from Oryza sativa subsp. japonica (Rice).